The primary structure comprises 402 residues: NADH dehydrogenase [ubiquinone] 1 alpha subcomplex subunit 9, mitochondrial (402 aa).

The N-terminal 43 residues, 1–43, are a transit peptide targeting the mitochondrion; sequence MQVVSRRLVQRPLVGGASIYSSSSLRSLYGVSNHLNGTDNCRY.

This sequence belongs to the complex I NDUFA9 subunit family. In terms of assembly, complex I is composed of at least 49 different subunits. This a component of the hydrophobic protein fraction. Requires FAD as cofactor.

Its subcellular location is the mitochondrion matrix. Functionally, accessory subunit of the mitochondrial membrane respiratory chain NADH dehydrogenase (Complex I), that is believed not to be involved in catalysis. Complex I functions in the transfer of electrons from NADH to the respiratory chain. The immediate electron acceptor for the enzyme is believed to be ubiquinone. The protein is NADH dehydrogenase [ubiquinone] 1 alpha subcomplex subunit 9, mitochondrial of Arabidopsis thaliana (Mouse-ear cress).